The chain runs to 428 residues: MDHDPKERLLLPPRAAAAAAANGPHRRAAPAAGGGGGGVAIDVHGLKRRGGGRRSWVRVDAATGASEAVEVAKPALMRRLDLPARDLRLLDPLFVYPSAILGRERAVVCNLERIRCIITADEALILRDPDVAGGGAETEEAVRRYVAELQRRLVDRADDLPFEFIALEVALEAACSFLDAQAVELEADAYPLLDELTTKISTLNLERVRRLKSKLVALTRRVQKVRDEIEQLMDDDGDMAEMYLTEKKRRMEASLLEEQAFQGMGNSGFGSSFSAPVSPVSSPPASRRLEKELSFARSRHDSFKSADSSQYSIEELEMLLEAYFVVIDYTLSKLTSLKEYIDDTEDFINIQLDNVRNQLIQFELLLTTATFVVAIFGVVSGVFGMNFEVDLFNVPHAFEWTLVITGVCGLVIFCCFIWYFKKRRFFPL.

A run of 2 helical transmembrane segments spans residues 364-384 (LLLTTATFVVAIFGVVSGVFG) and 400-420 (WTLVITGVCGLVIFCCFIWYF). Residues 384 to 386 (GMN) carry the Required for magnesium transport activity motif.

The protein belongs to the CorA metal ion transporter (MIT) (TC 1.A.35.5) family.

The protein resides in the membrane. In terms of biological role, magnesium transporter that may mediate the influx of magnesium. This is Magnesium transporter MRS2-C from Oryza sativa subsp. indica (Rice).